Consider the following 489-residue polypeptide: Beta-galactosidase (489 aa).

Lys-116 is modified (N6-methyllysine; partial). Lys-135 is subject to N6-methyllysine. The active-site Proton donor is Glu-206. N6-methyllysine; partial occurs at positions 273 and 311. An N6-methyllysine modification is found at Lys-332. Glu-387 (nucleophile) is an active-site residue.

As to quaternary structure, homotetramer.

The catalysed reaction is Hydrolysis of terminal non-reducing beta-D-galactose residues in beta-D-galactosides.. The polypeptide is Beta-galactosidase (lacS) (Saccharolobus solfataricus (strain ATCC 35092 / DSM 1617 / JCM 11322 / P2) (Sulfolobus solfataricus)).